The sequence spans 224 residues: Deoxyribose-phosphate aldolase (224 aa).

Asp-92 acts as the Proton donor/acceptor in catalysis. Residue Lys-155 is the Schiff-base intermediate with acetaldehyde of the active site. Lys-184 acts as the Proton donor/acceptor in catalysis.

It belongs to the DeoC/FbaB aldolase family. DeoC type 1 subfamily.

The protein localises to the cytoplasm. The catalysed reaction is 2-deoxy-D-ribose 5-phosphate = D-glyceraldehyde 3-phosphate + acetaldehyde. It participates in carbohydrate degradation; 2-deoxy-D-ribose 1-phosphate degradation; D-glyceraldehyde 3-phosphate and acetaldehyde from 2-deoxy-alpha-D-ribose 1-phosphate: step 2/2. Its function is as follows. Catalyzes a reversible aldol reaction between acetaldehyde and D-glyceraldehyde 3-phosphate to generate 2-deoxy-D-ribose 5-phosphate. The sequence is that of Deoxyribose-phosphate aldolase from Clostridium perfringens (strain 13 / Type A).